The following is a 280-amino-acid chain: MSVFDLFRGFFGFPGPRSHRDPFFGGMTRDDDDDDDDDDEAEEDRGAWGRESYAFDGSQPPEEFGFSFSPRGGMRFHGNFGFDDLVRDFNSIFSEMGAWTLPSHSPELPGPESETPGERLREGQTLRDSMLKYPDSHQPRIFEGVLESHAKPESPKPAPDWGSQGPFHRLDDTWPVSPHSRAKEDKDLDSQVSQEGLGPLLQPQPKSYFKSISVTKITKPDGTVEERRTVVDSEGRRETTVTHQEAHDSSRSDPDSQRSSALDDPFSILDLLLGRWFRSR.

Ser2 is subject to N-acetylserine. Positions 2–45 (SVFDLFRGFFGFPGPRSHRDPFFGGMTRDDDDDDDDDDEAEEDR) are required for localization in mitochondria. Disordered regions lie at residues 12–70 (GFPG…SFSP) and 100–263 (TLPS…SALD). Acidic residues predominate over residues 30–43 (DDDDDDDDDDEAEE). The interval 115 to 280 (TPGERLREGQ…LLLGRWFRSR (166 aa)) is involved in HCLS1 binding. Basic and acidic residues-rich tracts occupy residues 116–125 (PGERLREGQT) and 134–154 (PDSH…KPES). Positions 176-207 (VSPHSRAKEDKDLDSQVSQEGLGPLLQPQPKS) are involved in CASP9 binding. Residues 177–248 (SPHSRAKEDK…TTVTHQEAHD (72 aa)) form an involved in GNA13 binding region. The interval 184-280 (EDKDLDSQVS…LLLGRWFRSR (97 aa)) is required for localization in sarcoplasmic reticulum. The involved in PKD2 binding stretch occupies residues 185 to 280 (DKDLDSQVSQ…LLLGRWFRSR (96 aa)). Phosphoserine occurs at positions 190 and 193. The involved in PLN binding stretch occupies residues 204 to 226 (QPKSYFKSISVTKITKPDGTVEE). Positions 204-246 (QPKSYFKSISVTKITKPDGTVEERRTVVDSEGRRETTVTHQEA) are involved in ATP2A2 binding. Residues 211 to 280 (SISVTKITKP…LLLGRWFRSR (70 aa)) form a mediates interaction with UCP3 region. Over residues 218 to 256 (TKPDGTVEERRTVVDSEGRRETTVTHQEAHDSSRSDPDS) the composition is skewed to basic and acidic residues. Residues 271-280 (LLLGRWFRSR) form a required for ITGB6 binding region.

This sequence belongs to the HAX1 family. Interacts with ABCB1, ABCB4 and ABCB11. Directly associates with HCLS1/HS1, through binding to its N-terminal region. Interacts with CTTN. Interacts with PKD2. Interacts with GNA13. Interacts with CASP9. Interacts with ITGB6. Interacts with PLN and ATP2A2; these interactions are inhibited by calcium. Interacts with GRB7. Interacts (via C-terminus) with XIAP/BIRC4 (via BIR 2 domain and BIR 3 domain) and this interaction blocks ubiquitination of XIAP/BIRC4. Interacts with TPC2. Interacts with KCNC3. Interacts with XPO1. Interacts with RNF217. Interacts with UCP3; the interaction is direct and calcium-dependent. Interacts with MAPRE2; this interaction regulates cell migration in keratinocytes. As to expression, ubiquitous, with highest levels in kidney and liver (at protein level).

The protein resides in the mitochondrion matrix. It localises to the endoplasmic reticulum. It is found in the nucleus membrane. Its subcellular location is the cytoplasmic vesicle. The protein localises to the cytoplasm. The protein resides in the cell cortex. It localises to the cell membrane. It is found in the sarcoplasmic reticulum. Its subcellular location is the P-body. The protein localises to the nucleus. Functionally, recruits the Arp2/3 complex to the cell cortex and regulates reorganization of the cortical actin cytoskeleton via its interaction with KCNC3 and the Arp2/3 complex. Slows down the rate of inactivation of KCNC3 channels. Promotes GNA13-mediated cell migration. Involved in the clathrin-mediated endocytosis pathway. May be involved in internalization of ABC transporters such as ABCB11. May inhibit CASP9 and CASP3. Promotes cell survival. May regulate intracellular calcium pools. The chain is HCLS1-associated protein X-1 (Hax1) from Mus musculus (Mouse).